A 62-amino-acid polypeptide reads, in one-letter code: UPF0434 protein RL4569 (62 aa).

It belongs to the UPF0434 family.

The polypeptide is UPF0434 protein RL4569 (Rhizobium johnstonii (strain DSM 114642 / LMG 32736 / 3841) (Rhizobium leguminosarum bv. viciae)).